The following is a 444-amino-acid chain: NADH-quinone oxidoreductase subunit F (444 aa).

62 to 71 serves as a coordination point for NAD(+); the sequence is GRGGAGFLTG. 177-224 serves as a coordination point for FMN; sequence GAGRYICGEETALINSLEGRRANPRFKPPFPAYVGLWGKPTCVNNVET. [4Fe-4S] cluster contacts are provided by Cys354, Cys357, Cys360, and Cys401.

This sequence belongs to the complex I 51 kDa subunit family. In terms of assembly, composed of 13 different subunits. Subunits NuoCD, E, F, and G constitute the peripheral sector of the complex. It depends on [4Fe-4S] cluster as a cofactor. FMN is required as a cofactor.

It carries out the reaction a quinone + NADH + 5 H(+)(in) = a quinol + NAD(+) + 4 H(+)(out). Its function is as follows. NDH-1 shuttles electrons from NADH, via FMN and iron-sulfur (Fe-S) centers, to quinones in the respiratory chain. Couples the redox reaction to proton translocation (for every two electrons transferred, four hydrogen ions are translocated across the cytoplasmic membrane), and thus conserves the redox energy in a proton gradient. This is NADH-quinone oxidoreductase subunit F (nuoF) from Buchnera aphidicola subsp. Baizongia pistaciae (strain Bp).